The sequence spans 216 residues: Chaperone protein TorD (216 aa).

It belongs to the TorD/DmsD family. TorD subfamily.

It is found in the cytoplasm. Its function is as follows. Involved in the biogenesis of TorA. Acts on TorA before the insertion of the molybdenum cofactor and, as a result, probably favors a conformation of the apoenzyme that is competent for acquiring the cofactor. The polypeptide is Chaperone protein TorD (Ferrimonas balearica (strain DSM 9799 / CCM 4581 / KCTC 23876 / PAT)).